The primary structure comprises 371 residues: Ligninase LG5 (371 aa).

The signal sequence occupies residues 1 to 21; it reads MAFKKLLAVLTAALSLRAAQG. The propeptide occupies 22–27; that stretch reads AAVEKR. Disulfide bonds link C30/C42, C41/C311, C61/C146, and C275/C344. H74 serves as the catalytic Proton acceptor. Ca(2+)-binding residues include D75, G92, D94, and S96. H202 is a binding site for heme b. Residues S203, D220, T222, I225, and D227 each coordinate Ca(2+). N-linked (GlcNAc...) asparagine glycosylation is present at N283. The segment at 349 to 371 is disordered; the sequence is FPTLSTLPGPATSVARIPPPPGA.

It belongs to the peroxidase family. Ligninase subfamily. It depends on Ca(2+) as a cofactor. Heme b serves as cofactor.

It catalyses the reaction 1-(3,4-dimethoxyphenyl)-2-(2-methoxyphenoxy)propane-1,3-diol + H2O2 = 3,4-dimethoxybenzaldehyde + guaiacol + glycolaldehyde + H2O. The enzyme catalyses 2 (3,4-dimethoxyphenyl)methanol + H2O2 = 2 (3,4-dimethoxyphenyl)methanol radical + 2 H2O. It functions in the pathway secondary metabolite metabolism; lignin degradation. Its function is as follows. Depolymerization of lignin. Catalyzes the C(alpha)-C(beta) cleavage of the propyl side chains of lignin. In Phanerodontia chrysosporium (White-rot fungus), this protein is Ligninase LG5 (GLG5).